A 130-amino-acid chain; its full sequence is Glycine cleavage system H protein (130 aa).

In terms of domain architecture, Lipoyl-binding spans 22–103 (QAWIGISDYA…PYANYIVVVA (82 aa)). Lysine 63 carries the post-translational modification N6-lipoyllysine.

This sequence belongs to the GcvH family. The glycine cleavage system is composed of four proteins: P, T, L and H. The cofactor is (R)-lipoate.

Functionally, the glycine cleavage system catalyzes the degradation of glycine. The H protein shuttles the methylamine group of glycine from the P protein to the T protein. This is Glycine cleavage system H protein from Syntrophomonas wolfei subsp. wolfei (strain DSM 2245B / Goettingen).